Consider the following 2799-residue polypeptide: E3 ubiquitin-protein ligase UBR5 (2799 aa).

An N-acetylthreonine modification is found at Thr-2. Positions Asp-77–Asp-88 are enriched in basic and acidic residues. The segment at Asp-77–Gln-175 is disordered. Polar residues predominate over residues Gly-89 to Ser-110. Ser-110 bears the Phosphoserine mark. The span at Gly-135–Ser-144 shows a compositional bias: gly residues. The UBA domain maps to Val-184 to Arg-226. Ser-327 is modified (phosphoserine). Residues Phe-328 to Asn-347 show a composition bias toward basic and acidic residues. Residues Phe-328–Ser-352 form a disordered region. 2 positions are modified to phosphoserine: Ser-352 and Ser-578. The tract at residues Pro-579–Glu-648 is disordered. Positions Lys-583–Lys-604 are enriched in basic and acidic residues. Ser-612 is subject to Phosphoserine. The segment covering Ala-614–Ser-628 has biased composition (low complexity). Thr-637 is modified (phosphothreonine). A phosphoserine mark is found at Ser-808, Ser-928, and Ser-1018. Disordered stretches follow at residues Ala-999–Pro-1031 and Thr-1052–Val-1075. Pro residues predominate over residues Val-1017 to Pro-1031. A compositionally biased stretch (polar residues) spans Thr-1052 to Pro-1073. Phosphothreonine is present on residues Thr-1115 and Thr-1135. The UBR-type zinc finger occupies Asp-1177 to Ala-1245. Positions 1179, 1196, 1199, 1208, 1211, 1215, 1216, and 1219 each coordinate Zn(2+). Position 1227 is a phosphoserine (Ser-1227). The Zn(2+) site is built by Cys-1232, Cys-1234, and Cys-1240. Residues Arg-1299–Asp-1318 are disordered. Residues Ser-1308, Ser-1355, Ser-1375, and Ser-1481 each carry the phosphoserine modification. The tract at residues Ser-1515–Ser-1740 is disordered. The span at Ser-1524–Ser-1537 shows a compositional bias: low complexity. A compositionally biased stretch (polar residues) spans Tyr-1538 to Pro-1553. Ser-1549 is subject to Phosphoserine. 2 stretches are compositionally biased toward acidic residues: residues Glu-1559–Val-1574 and His-1605–Leu-1614. Positions Asn-1629–Gly-1638 are enriched in polar residues. Low complexity-rich tracts occupy residues Ser-1641–Val-1657, Ser-1668–Ser-1681, and Ala-1726–Ser-1740. Phosphothreonine is present on Thr-1736. Ser-1741 is subject to Phosphoserine. Residue Tyr-1746 is modified to Phosphotyrosine. Ser-1780 carries the phosphoserine modification. Residues Leu-1859–Ala-1890 form a disordered region. Positions Ala-1879 to Ala-1890 are enriched in basic and acidic residues. Thr-1969 carries the post-translational modification Phosphothreonine. The segment at Gly-1984–Pro-2021 is disordered. The span at Ile-1985 to Thr-1998 shows a compositional bias: acidic residues. Ser-1990, Ser-2026, and Ser-2028 each carry phosphoserine. Thr-2030 is modified (phosphothreonine). Residue Ser-2076 is modified to Phosphoserine. Positions Arg-2117–His-2142 are disordered. A Phosphothreonine modification is found at Thr-2213. Phosphoserine is present on residues Ser-2241 and Ser-2289. The interval His-2323–Ala-2392 is disordered. 2 stretches are compositionally biased toward basic and acidic residues: residues Asn-2332–Arg-2348 and Ser-2356–Leu-2368. Residues Pro-2377–Arg-2454 enclose the PABC domain. Residues Leu-2462–Val-2799 enclose the HECT domain. 3 positions are modified to phosphoserine: Ser-2469, Ser-2484, and Ser-2486. The tract at residues Val-2473–Asp-2493 is disordered. Catalysis depends on Cys-2768, which acts as the Glycyl thioester intermediate.

The protein belongs to the UBR5 family. As to quaternary structure, homotetramer; composed of a dimer of dimers. Associates with CDK9 and TFIIS/TCEA1 and forms a transcription regulatory complex made of CDK9, RNAP II, UBR5 and TFIIS/TCEA1 that can stimulate target gene transcription (e.g. gamma fibrinogen/FGG) by recruiting their promoters. Associates with the E3 ligase complex containing DYRK2, EDD/UBR5, DDB1 and DCAF1 proteins (EDVP complex). Binds TOPBP1. Interacts with PIH1D1. Interacts with CIB1. (Microbial infection) Interacts with human T-cell leukemia virus 1/HTLV-1 protein HBZ; this interaction modulates HBZ stability. As to expression, widely expressed. Most abundant in testis and expressed at high levels in brain, pituitary and kidney.

It is found in the nucleus. The protein resides in the cytoplasm. It catalyses the reaction S-ubiquitinyl-[E2 ubiquitin-conjugating enzyme]-L-cysteine + [acceptor protein]-L-lysine = [E2 ubiquitin-conjugating enzyme]-L-cysteine + N(6)-ubiquitinyl-[acceptor protein]-L-lysine.. It functions in the pathway protein modification; protein ubiquitination. E3 ubiquitin-protein ligase involved in different protein quality control pathways in the cytoplasm and nucleus. Mainly acts as a ubiquitin chain elongator that extends pre-ubiquitinated substrates. Component of the N-end rule pathway: ubiquitinates proteins bearing specific N-terminal residues that are destabilizing according to the N-end rule, leading to their degradation. Recognizes type-1 N-degrons, containing positively charged amino acids (Arg, Lys and His). Together with UBR4, part of a cytoplasm protein quality control pathway that prevents protein aggregation by catalyzing assembly of heterotypic 'Lys-11'-/'Lys-48'-linked branched ubiquitin chains on aggregated proteins, leading to substrate recognition by the segregase p97/VCP and degradation by the proteasome: UBR5 is probably branching multiple 'Lys-48'-linked chains of substrates initially modified with mixed conjugates by UBR4. Together with ITCH, catalyzes 'Lys-48'-/'Lys-63'-branched ubiquitination of TXNIP, leading to its degradation: UBR5 mediates branching of 'Lys-48'-linked chains of substrates initially modified with 'Lys-63'-linked conjugates by ITCH. Catalytic component of a nuclear protein quality control pathway that mediates ubiquitination and degradation of unpaired transcription factors (i.e. transcription factors that are not assembled into functional multiprotein complexes): specifically recognizes and binds degrons that are not accessible when transcription regulators are associated with their coactivators. Ubiquitinates various unpaired transcription regulator (MYC, SUPT4H1, SUPT5H, CDC20 and MCRS1), as well as ligand-bound nuclear receptors (ESR1, NR1H3, NR3C1, PGR, RARA, RXRA AND VDR) that are not associated with their nuclear receptor coactivators (NCOAs). Involved in maturation and/or transcriptional regulation of mRNA by mediating polyubiquitination and activation of CDK9. Also acts as a regulator of DNA damage response by acting as a suppressor of RNF168, an E3 ubiquitin-protein ligase that promotes accumulation of 'Lys-63'-linked histone H2A and H2AX at DNA damage sites, thereby acting as a guard against excessive spreading of ubiquitinated chromatin at damaged chromosomes. Regulates DNA topoisomerase II binding protein (TopBP1) in the DNA damage response. Ubiquitinates acetylated PCK1. Acts as a positive regulator of the canonical Wnt signaling pathway by mediating (1) ubiquitination and stabilization of CTNNB1, and (2) 'Lys-48'-linked ubiquitination and degradation of TLE3. Promotes disassembly of the mitotic checkpoint complex (MCC) from the APC/C complex by catalyzing ubiquitination of BUB1B, BUB3 and CDC20. Plays an essential role in extraembryonic development. Required for the maintenance of skeletal tissue homeostasis by acting as an inhibitor of hedgehog (HH) signaling. The protein is E3 ubiquitin-protein ligase UBR5 (UBR5) of Homo sapiens (Human).